The chain runs to 932 residues: ER degradation-enhancing alpha-mannosidase-like protein 3 (932 aa).

The signal sequence occupies residues 1–41 (MSEAGGRGCGSPVPQRARWRLVAATAAFCLVSATSVWTAGA). N118 is a glycosylation site (N-linked (GlcNAc...) asparagine). The active-site Proton donor is the E146. A glycan (N-linked (GlcNAc...) asparagine) is linked at N195. D293 is an active-site residue. E387 (proton donor) is an active-site residue. Residue E405 is part of the active site. T491 is a binding site for Ca(2+). 2 N-linked (GlcNAc...) asparagine glycosylation sites follow: N504 and N511. The region spanning 674-779 (LSKHKETRGF…KEGSIILDAI (106 aa)) is the PA domain. A compositionally biased stretch (basic and acidic residues) spans 790–799 (SDKAKDRDPE). Residues 790-908 (SDKAKDRDPE…PNVSWGKKVQ (119 aa)) are disordered. N810 and N814 each carry an N-linked (GlcNAc...) asparagine glycan. Residues 812–825 (SQNQSGEQISSSSQ) show a composition bias toward low complexity. Residues 856-890 (ASISPSEQTSNPTENHETTNLNGECTDLDNQLQEQ) are compositionally biased toward polar residues. Residue N900 is glycosylated (N-linked (GlcNAc...) asparagine). A Prevents secretion from ER motif is present at residues 929 to 932 (KDEL).

It belongs to the glycosyl hydrolase 47 family. It depends on Ca(2+) as a cofactor.

Its subcellular location is the endoplasmic reticulum lumen. It carries out the reaction N(4)-(alpha-D-Man-(1-&gt;2)-alpha-D-Man-(1-&gt;2)-alpha-D-Man-(1-&gt;3)-[alpha-D-Man-(1-&gt;2)-alpha-D-Man-(1-&gt;3)-[alpha-D-Man-(1-&gt;2)-alpha-D-Man-(1-&gt;6)]-alpha-D-Man-(1-&gt;6)]-beta-D-Man-(1-&gt;4)-beta-D-GlcNAc-(1-&gt;4)-beta-D-GlcNAc)-L-asparaginyl-[protein] (N-glucan mannose isomer 9A1,2,3B1,2,3) + 4 H2O = N(4)-(alpha-D-Man-(1-&gt;3)-[alpha-D-Man-(1-&gt;3)-[alpha-D-Man-(1-&gt;6)]-alpha-D-Man-(1-&gt;6)]-beta-D-Man-(1-&gt;4)-beta-D-GlcNAc-(1-&gt;4)-beta-D-GlcNAc)-L-asparaginyl-[protein] (N-glucan mannose isomer 5A1,2) + 4 beta-D-mannose. The enzyme catalyses N(4)-(alpha-D-Man-(1-&gt;2)-alpha-D-Man-(1-&gt;2)-alpha-D-Man-(1-&gt;3)-[alpha-D-Man-(1-&gt;3)-[alpha-D-Man-(1-&gt;2)-alpha-D-Man-(1-&gt;6)]-alpha-D-Man-(1-&gt;6)]-beta-D-Man-(1-&gt;4)-beta-D-GlcNAc-(1-&gt;4)-beta-D-GlcNAc)-L-asparaginyl-[protein] (N-glucan mannose isomer 8A1,2,3B1,3) + 3 H2O = N(4)-(alpha-D-Man-(1-&gt;3)-[alpha-D-Man-(1-&gt;3)-[alpha-D-Man-(1-&gt;6)]-alpha-D-Man-(1-&gt;6)]-beta-D-Man-(1-&gt;4)-beta-D-GlcNAc-(1-&gt;4)-beta-D-GlcNAc)-L-asparaginyl-[protein] (N-glucan mannose isomer 5A1,2) + 3 beta-D-mannose. The protein operates within protein modification; protein glycosylation. In terms of biological role, involved in endoplasmic reticulum-associated degradation (ERAD). Accelerates the glycoprotein ERAD by proteasomes, by catalyzing mannose trimming from Man8GlcNAc2 to Man7GlcNAc2 in the N-glycans. May also participate in mannose trimming from all glycoproteins and not just misfolded ones targeted to ERAD. May have alpha 1,2-mannosidase activity. The chain is ER degradation-enhancing alpha-mannosidase-like protein 3 (EDEM3) from Homo sapiens (Human).